Here is an 859-residue protein sequence, read N- to C-terminus: Envelope glycoprotein (859 aa).

A propeptide spanning residues 1–6 (MVSIAF) is cleaved from the precursor. Topologically, residues 7–614 (YGGIPGGIST…KDLWSHIGNW (608 aa)) are extracellular. N-linked (GlcNAc...) asparagine; by host glycans are attached at residues asparagine 40, asparagine 112, asparagine 141, asparagine 148, asparagine 186, asparagine 214, asparagine 233, asparagine 244, asparagine 313, asparagine 340, asparagine 368, asparagine 399, asparagine 406, and asparagine 411. The segment at 446–466 (FGISAIVAAIVAATAIAASAT) is fusion peptide. 2 N-linked (GlcNAc...) asparagine; by host glycosylation sites follow: asparagine 483 and asparagine 490. The interval 498–513 (LIERQIKILYAMILQT) is immunosuppression. Asparagine 550 and asparagine 557 each carry an N-linked (GlcNAc...) asparagine; by host glycan. 2 coiled-coil regions span residues 576-624 (ILTT…SIIK) and 663-699 (KKFHHKHASREDTWDQAQHNIHLAGVTGGSGDKYYKQ). The chain crosses the membrane as a helical span at residues 615-635 (IPGLGASIIKYIVMFLLIYLL). At 636-859 (LTSSPKILRA…TSHVSMPQYV (224 aa)) the chain is on the cytoplasmic side.

As to quaternary structure, the mature envelope protein (Env) consists of a trimer of SU-TM heterodimers attached by noncovalent interactions or by a labile interchain disulfide bond. Specific enzymatic cleavages in vivo yield mature proteins. Envelope glycoproteins are synthesized as an inactive precursor that is N-glycosylated and processed likely by host cell furin or by a furin-like protease in the Golgi to yield the mature SU and TM proteins. The cleavage site between SU and TM requires the minimal sequence [KR]-X-[KR]-R.

It is found in the virion membrane. It localises to the host cell membrane. In terms of biological role, the surface protein (SU) attaches the virus to the host cell by binding to its receptor. This interaction triggers the refolding of the transmembrane protein (TM) and is thought to activate its fusogenic potential by unmasking its fusion peptide. Fusion occurs at the host cell plasma membrane. Functionally, the transmembrane protein (TM) acts as a class I viral fusion protein. Under the current model, the protein has at least 3 conformational states: pre-fusion native state, pre-hairpin intermediate state, and post-fusion hairpin state. During viral and target cell membrane fusion, the coiled coil regions (heptad repeats) assume a trimer-of-hairpins structure, positioning the fusion peptide in close proximity to the C-terminal region of the ectodomain. The formation of this structure appears to drive apposition and subsequent fusion of viral and target cell membranes. Membranes fusion leads to delivery of the nucleocapsid into the cytoplasm. This is Envelope glycoprotein (env) from Equus asinus (Donkey).